The primary structure comprises 299 residues: MTDNTRLRIAMQKSGRLSDDSRELLARCGIKINLHTQRLIAMAENMPIDILRVRDDDIPGLVMDGVVDLGIIGENVLEEELLNRRAQGEDPRYFTLRRLDFGGCRLSLATPVDEAWDGPLSLNGKRIATSYPHLLKRYLDQKGISFKSCLLNGSVEVAPRAGLADAICDLVSTGATLEANGLREVEVIYRSKACLIQRDGEMEESKQQLIDKLLTRIQGVIQARESKYIMMHAPTDRLDEVIALLPGAERPTILPLAGDQQRVAMHMVSSETLFWETMEKLKALGASSILVLPIEKMME.

Belongs to the ATP phosphoribosyltransferase family. Long subfamily. Equilibrium between an active dimeric form, an inactive hexameric form and higher aggregates. Interconversion between the various forms is largely reversible and is influenced by the natural substrates and inhibitors of the enzyme. It depends on Mg(2+) as a cofactor.

The protein resides in the cytoplasm. It catalyses the reaction 1-(5-phospho-beta-D-ribosyl)-ATP + diphosphate = 5-phospho-alpha-D-ribose 1-diphosphate + ATP. It functions in the pathway amino-acid biosynthesis; L-histidine biosynthesis; L-histidine from 5-phospho-alpha-D-ribose 1-diphosphate: step 1/9. Feedback inhibited by histidine. Functionally, catalyzes the condensation of ATP and 5-phosphoribose 1-diphosphate to form N'-(5'-phosphoribosyl)-ATP (PR-ATP). Has a crucial role in the pathway because the rate of histidine biosynthesis seems to be controlled primarily by regulation of HisG enzymatic activity. This chain is ATP phosphoribosyltransferase, found in Escherichia fergusonii (strain ATCC 35469 / DSM 13698 / CCUG 18766 / IAM 14443 / JCM 21226 / LMG 7866 / NBRC 102419 / NCTC 12128 / CDC 0568-73).